The chain runs to 435 residues: Serine protease snk (435 aa).

The N-terminal stretch at 1-27 is a signal peptide; that stretch reads MIILWSLIVHLQLTCLHLILQTPNLEA. The region spanning 92 to 138 is the Clip domain; that stretch reads FCRRSFDGRSGYCILAYQCLHVIREYRVHGTRIDICTHRNNVPVICC. Disulfide bonds link cysteine 93-cysteine 137, cysteine 104-cysteine 127, cysteine 110-cysteine 138, cysteine 179-cysteine 303, cysteine 220-cysteine 236, cysteine 346-cysteine 366, and cysteine 377-cysteine 408. In terms of domain architecture, Peptidase S1 spans 186 to 432; that stretch reads IVGGTPTRHG…YLDWIEKIAF (247 aa). The Charge relay system role is filled by histidine 235. A glycan (N-linked (GlcNAc...) asparagine) is linked at asparagine 255. Aspartate 283 serves as the catalytic Charge relay system. The active-site Charge relay system is serine 381.

It belongs to the peptidase S1 family. CLIP subfamily. In terms of assembly, interacts (via N-terminal prodomain) with ea/easter (via Peptidase domain); leads to proteolytic activation of ea by snk. This interaction does not require sulfation of a vitelline membrane component by pip but proteolytic cleavage of ea by snk does. Post-translationally, proteolytically activated by gd. May also be cleaved by another protease.

It is found in the secreted. Its function is as follows. Component of the extracellular signaling pathway that establishes the dorsal-ventral pathway of the embryo. A protease cascade involving ndl, gd, snk and ea results in activation of the spz Toll receptor ligand; acts downstream of ndl and gd. Activation of ea requires both activation of the ndl-gd-snk protease cascade and sulfation of a vitelline membrane component by pip. Localized activation of the Toll receptor in the ventral region of the embryo defines cell identities along the dorsal-ventral continuum. The protein is Serine protease snk of Drosophila melanogaster (Fruit fly).